The sequence spans 357 residues: DNA polymerase IV (357 aa).

Positions 4–185 (IIHVDMDCYF…LSLRQIPGVG (182 aa)) constitute a UmuC domain. Mg(2+) contacts are provided by Asp8 and Asp103. The active site involves Glu104.

It belongs to the DNA polymerase type-Y family. In terms of assembly, monomer. Requires Mg(2+) as cofactor.

It localises to the cytoplasm. It carries out the reaction DNA(n) + a 2'-deoxyribonucleoside 5'-triphosphate = DNA(n+1) + diphosphate. Its function is as follows. Poorly processive, error-prone DNA polymerase involved in untargeted mutagenesis. Copies undamaged DNA at stalled replication forks, which arise in vivo from mismatched or misaligned primer ends. These misaligned primers can be extended by PolIV. Exhibits no 3'-5' exonuclease (proofreading) activity. May be involved in translesional synthesis, in conjunction with the beta clamp from PolIII. The sequence is that of DNA polymerase IV from Shewanella oneidensis (strain ATCC 700550 / JCM 31522 / CIP 106686 / LMG 19005 / NCIMB 14063 / MR-1).